The sequence spans 1155 residues: Agglutinin-like protein 3 (1155 aa).

The N-terminal stretch at 1-17 (MLQQYTLLLIYLSVATA) is a signal peptide. 4 disulfides stabilise this stretch: Cys73-Cys150, Cys96-Cys112, Cys205-Cys298, and Cys227-Cys256. 3 ALS repeats span residues 365–396 (TTIT…VDIP), 401–432 (TTVT…VQVP), and 438–469 (VTTT…IREP). An N-linked (GlcNAc...) asparagine glycan is attached at Asn471. 2 ALS repeats span residues 474–505 (VTTT…IKEP) and 510–541 (VTTT…IREP). A glycan (N-linked (GlcNAc...) asparagine) is linked at Asn543. ALS repeat units lie at residues 546–577 (VTTT…IREP) and 582–613 (VTTT…IREP). Asn615 carries an N-linked (GlcNAc...) asparagine glycan. An ALS 8 repeat occupies 618–649 (VTTTEYWSQSYATTTTITAPPGETDTVLIREP). Asn651 carries an N-linked (GlcNAc...) asparagine glycan. ALS repeat units follow at residues 654–685 (VTTT…IKEP) and 690–721 (VTTT…IREP). N-linked (GlcNAc...) asparagine glycosylation occurs at Asn723. An ALS 11 repeat occupies 726-757 (VTTTEYWSQSYATTTTITAPPGETDTVLIREP). The N-linked (GlcNAc...) asparagine glycan is linked to Asn759. The ALS 12 repeat unit spans residues 762–793 (VTTTEYWSQSFATTTTVTAPPGGTDTVIIREP). An N-linked (GlcNAc...) asparagine glycan is attached at Asn795. 2 ALS repeats span residues 798–829 (VTTT…IREP) and 834–863 (VTTT…VIIY). Asn881 carries N-linked (GlcNAc...) asparagine glycosylation. Residues 936–1115 (TTTESTLQSP…NSDTQQTTLS (180 aa)) are disordered. The span at 949–965 (FSESGVSVETESSTFTT) shows a compositional bias: low complexity. Polar residues predominate over residues 966 to 977 (AQTNPSVPTTES). The span at 1010–1019 (TTSTAASTST) shows a compositional bias: low complexity. Asn1023 carries an N-linked (GlcNAc...) asparagine glycan. Composition is skewed to low complexity over residues 1034-1058 (ASSP…STSV) and 1071-1115 (APSA…TTLS). A glycan (N-linked (GlcNAc...) asparagine) is linked at Asn1099. Ser1134 is lipidated: GPI-anchor amidated serine. Positions 1135 to 1155 (GSVIQHSTWLCGLITLLSLFI) are cleaved as a propeptide — removed in mature form.

This sequence belongs to the ALS family. The GPI-anchor is attached to the protein in the endoplasmic reticulum and serves to target the protein to the cell surface. There, the glucosamine-inositol phospholipid moiety is cleaved off and the GPI-modified mannoprotein is covalently attached via its lipidless GPI glycan remnant to the 1,6-beta-glucan of the outer cell wall layer.

Its subcellular location is the cell membrane. The protein resides in the secreted. It is found in the cell wall. In terms of biological role, cell surface adhesion protein which mediates both yeast-to-host tissue adherence and yeast aggregation. Plays an important role in the biofilm formation and pathogenesis of C.albicans infections. Necessary for C.albicans to bind to N-cadherin on endothelial cells and E-cadherin on oral epithelial cells and subsequent endocytosis by these cells. During disseminated infection, mediates initial trafficking to the brain and renal cortex and contributes to fungal persistence in the kidneys. This is Agglutinin-like protein 3 (ALS3) from Candida albicans (strain SC5314 / ATCC MYA-2876) (Yeast).